A 194-amino-acid polypeptide reads, in one-letter code: Small ribosomal subunit protein uS11m (194 aa).

It belongs to the universal ribosomal protein uS11 family. In terms of assembly, component of the mitochondrial small ribosomal subunit (mt-SSU). Mature mammalian 55S mitochondrial ribosomes consist of a small (28S) and a large (39S) subunit. The 28S small subunit contains a 12S ribosomal RNA (12S mt-rRNA) and 30 different proteins. The 39S large subunit contains a 16S rRNA (16S mt-rRNA), a copy of mitochondrial valine transfer RNA (mt-tRNA(Val)), which plays an integral structural role, and 52 different proteins.

It localises to the mitochondrion. The sequence is that of Small ribosomal subunit protein uS11m (MRPS11) from Homo sapiens (Human).